We begin with the raw amino-acid sequence, 680 residues long: SH3 domain-binding protein 1 (680 aa).

Basic residues predominate over residues 1–11 (MMKRQLHRMRQ). Disordered stretches follow at residues 1 to 24 (MMKR…TPET) and 160 to 184 (SQAA…HTTT). The interaction with CGNL1 stretch occupies residues 1–275 (MMKRQLHRMR…TAAPFSRVYG (275 aa)). The region spanning 81–262 (MAESFKELDP…RDNHSQADHS (182 aa)) is the BAR domain. A compositionally biased stretch (polar residues) spans 160–169 (SQAAKNSGSN). Phosphoserine is present on residues S241 and S262. The region spanning 276-469 (VSLRTHLQDL…ALIQNADTLF (194 aa)) is the Rho-GAP domain. Residues 470 to 680 (PGDINFNVSG…RPRGLISETE (211 aa)) form an interaction with CD2AP region. The segment at 488-680 (EKVSSQQVSE…RPRGLISETE (193 aa)) is disordered. A compositionally biased stretch (pro residues) spans 502–516 (VTVPAPATTPAPTPA). The residue at position 535 (S535) is a Phosphoserine. A compositionally biased stretch (polar residues) spans 536-546 (PKVSRNPTETA). The span at 561–571 (PARPTMPPPQP) shows a compositional bias: pro residues. Residue S582 is modified to Phosphoserine. Position 592 is a phosphothreonine (T592). An SH3-binding motif is present at residues 607 to 616 (APTMPPPLPP). Residues 609-621 (TMPPPLPPVPPQP) are compositionally biased toward pro residues. A Phosphoserine modification is found at S632. Residues 660-671 (HPPPPALPPQPR) are compositionally biased toward pro residues.

Interacts with RAC1. Interacts with the exocyst via EXOC4 and EXOC8; required for the localization of both SH3BP1 and the exocyst to the leading edge of migrating cells. Interacts with CD2AP and CGNL1; probably part of a complex at cell junctions. Interacts with CAPZA1; recruits CAPZA1 to forming cell junctions. May interact with AFDN. Interacts with PLXND1; they dissociate upon SEMA3E binding to PLXND1 allowing SH3BP1 to transduce downstream signal through RAC1 inactivation. Interacts with ABL1, GRB2 and SRC (via SH3 domain). Expressed in all tissues examined. Highest levels found in spleen and brain, lowest in heart and liver.

It localises to the cell projection. It is found in the cell junction. The protein resides in the tight junction. The protein localises to the adherens junction. Its subcellular location is the phagocytic cup. It localises to the nucleus. It is found in the cytoplasm. The protein resides in the cytosol. Its function is as follows. GTPase activating protein (GAP) which specifically converts GTP-bound Rho-type GTPases including RAC1 and CDC42 in their inactive GDP-bound form. By specifically inactivating RAC1 at the leading edge of migrating cells, it regulates the spatiotemporal organization of cell protrusions which is important for proper cell migration. Also negatively regulates CDC42 in the process of actin remodeling and the formation of epithelial cell junctions. Through its GAP activity toward RAC1 and/or CDC42 plays a specific role in phagocytosis of large particles. Specifically recruited by a PI3 kinase/PI3K-dependent mechanism to sites of large particles engagement, inactivates RAC1 and/or CDC42 allowing the reorganization of the underlying actin cytoskeleton required for engulfment. It also plays a role in angiogenesis and the process of repulsive guidance as part of a semaphorin-plexin signaling pathway. Following the binding of PLXND1 to extracellular SEMA3E it dissociates from PLXND1 and inactivates RAC1, inducing the intracellular reorganization of the actin cytoskeleton and the collapse of cells. The protein is SH3 domain-binding protein 1 of Mus musculus (Mouse).